The primary structure comprises 511 residues: Histidine ammonia-lyase (511 aa).

Residues 142–144 constitute a cross-link (5-imidazolinone (Ala-Gly)); it reads ASG. A 2,3-didehydroalanine (Ser) modification is found at Ser143.

Belongs to the PAL/histidase family. In terms of processing, contains an active site 4-methylidene-imidazol-5-one (MIO), which is formed autocatalytically by cyclization and dehydration of residues Ala-Ser-Gly.

Its subcellular location is the cytoplasm. It catalyses the reaction L-histidine = trans-urocanate + NH4(+). The protein operates within amino-acid degradation; L-histidine degradation into L-glutamate; N-formimidoyl-L-glutamate from L-histidine: step 1/3. In Rhizobium rhizogenes (Agrobacterium rhizogenes), this protein is Histidine ammonia-lyase.